Here is a 471-residue protein sequence, read N- to C-terminus: Abscission/NoCut checkpoint regulator (471 aa).

The segment at 39–64 (GGAGQGREGRSWGEGPRGPGLGRRDL) is disordered. Residues 74-133 (ATMESRCYGCAVKFTLFKKEYGCKNCGRAFCSGCLSFSAAVPRTGNTQQKVCKQCHEVLT) form an FYVE-type zinc finger. 8 residues coordinate Zn(2+): Cys80, Cys83, Cys96, Cys99, Cys104, Cys107, Cys125, and Cys128. Residue Ser144 is modified to Phosphoserine. Residues 174–187 (DQMIAERLARLRQE) carry the MIM1-A motif. Residue Lys207 forms a Glycyl lysine isopeptide (Lys-Gly) (interchain with G-Cter in SUMO2) linkage. Thr243 carries the post-translational modification Phosphothreonine. The interval 271–299 (KGGGPAASLQNDLNQGGPGSTNSKRQANW) is disordered. The span at 278 to 299 (SLQNDLNQGGPGSTNSKRQANW) shows a compositional bias: polar residues. 2 positions are modified to phosphoserine: Gly286 and Ser293. Residues 311-375 (EAALELREEN…RVLQQLTEEA (65 aa)) adopt a coiled-coil conformation. Residues 326–339 (ILALAKRLAMLRGQ) carry the MIM1-B motif. Residue Ser354 is modified to Phosphoserine. The tract at residues 386–412 (PAEQASRPWTQPRGAEPEAQDVDPRPE) is disordered. Ser463 bears the Phosphoserine mark.

As to quaternary structure, interacts (via MIM1-B) with VPS4A; interaction takes place at the midbody ring following cytokinesis checkpoint activation. Post-translationally, phosphorylated in vitro at Ser-22 by AURKB; however, phosphorylation at this site could not be confirmed in vivo. Detected in brain, heart, skeletal muscle and kidney. Expressed in the liver (at protein level).

The protein localises to the cytoplasm. It localises to the cytoskeleton. Its subcellular location is the microtubule organizing center. It is found in the centrosome. The protein resides in the cleavage furrow. The protein localises to the midbody. It localises to the midbody ring. Functionally, key regulator of abscission step in cytokinesis: part of the cytokinesis checkpoint, a process required to delay abscission to prevent both premature resolution of intercellular chromosome bridges and accumulation of DNA damage. Together with CHMP4C, required to retain abscission-competent VPS4 (VPS4A and/or VPS4B) at the midbody ring until abscission checkpoint signaling is terminated at late cytokinesis. Deactivation of AURKB results in dephosphorylation of CHMP4C followed by its dissociation from ZFYVE19/ANCHR and VPS4 and subsequent abscission. This chain is Abscission/NoCut checkpoint regulator (ZFYVE19), found in Homo sapiens (Human).